Consider the following 2472-residue polypeptide: Spectrin alpha chain, non-erythrocytic 1 (2472 aa).

At Met1 the chain carries N-acetylmethionine. 9 Spectrin repeats span residues 45–146 (RFQF…IKLL), 150–251 (KLVQ…QGKL), 256–358 (EVQR…ARLN), 361–465 (YRLQ…QYEQ), 468–570 (DLQL…AQLA), 574–676 (HLQQ…KLRE), 679–781 (QQQQ…QKLA), 785–888 (RLQQ…DLED), and 891–969 (QAQQ…ETGK). Phosphoserine is present on Ser587. Residue Lys637 is modified to N6-acetyllysine. Lys803 is modified (N6-acetyllysine). Residues Ser924, Ser982, Ser999, Ser1029, Ser1031, and Ser1041 each carry the phosphoserine modification. The SH3 domain occupies 967-1026 (TGKELVLALYDYQEKSPREVTMKKGDILTLLNSTNKDWWKVEVNDRQGFVPAAYVKKLDP). The stretch at 1096-1166 (LFREANELQQ…LESEGLMAEE (71 aa)) is one Spectrin 10 repeat. Residue Tyr1176 is modified to Phosphotyrosine. A phosphoserine mark is found at Ser1190, Ser1207, Ser1217, Ser1291, Ser1306, Ser1323, and Ser1338. Residues 1233–1336 (HEVQRFHRDA…RADQRKAKLG (104 aa)) form a Spectrin 11 repeat. Spectrin repeat units follow at residues 1339–1442 (HDLQ…MMLD) and 1446–1549 (ELQL…KLGE). Lys1519 is subject to N6-acetyllysine. A phosphoserine mark is found at Ser1550, Ser1557, Ser1578, Ser1615, and Ser1647. 7 Spectrin repeats span residues 1552 to 1656 (TLQQ…KLKE), 1659 to 1762 (KQQN…KLNE), 1764 to 1868 (HRLH…RLEE), 1871 to 1974 (EYQQ…KLDE), 1978 to 2081 (FLQF…KLLE), 2092 to 2194 (LFLT…LELQ), and 2206 to 2310 (LRQE…NLEQ). Thr2020 carries the phosphothreonine modification. Lys2052 bears the N6-acetyllysine mark. 3 EF-hand domains span residues 2323-2358 (EALKEFSMMFKHFDKDKSGRLNHQEFKSCLRSLGYD), 2366-2401 (EPDPEFEAILDTVDPNRDGHVSLQEYMAFMISRETE), and 2404-2439 (KSSEEIESAFRALSSEGKPYVTKEELYQNLTREQAD). Ca(2+)-binding residues include Asp2336, Asp2338, Ser2340, Arg2342, Glu2347, Asp2379, Asn2381, Asp2383, His2385, and Glu2390. Lys2421 bears the N6-acetyllysine mark.

This sequence belongs to the spectrin family. Like erythrocyte spectrin, the spectrin-like proteins are capable of forming dimers which can further associate to tetramers. Interacts (via C-terminal spectrin repeats) with TRPC4. Interacts with CALM and EMD. Interacts with isoform 1 of ACP1. Identified in a complex with ACTN4, CASK, IQGAP1, MAGI2, NPHS1 and SPTBN1. Interacts with SHANK3 (via ANK repeats). Interacts with CLN3; this interaction regulates the fodrin localization at the plasma membrane. Phosphorylation of Tyr-1176 decreases sensitivity to cleavage by calpain in vitro.

The protein localises to the cytoplasm. The protein resides in the cytoskeleton. It localises to the cell cortex. In terms of biological role, fodrin, which seems to be involved in secretion, interacts with calmodulin in a calcium-dependent manner and is thus candidate for the calcium-dependent movement of the cytoskeleton at the membrane. This is Spectrin alpha chain, non-erythrocytic 1 (SPTAN1) from Homo sapiens (Human).